The primary structure comprises 550 residues: Chaperonin GroEL (550 aa).

Residues 30–33, lysine 51, 87–91, glycine 415, 479–481, and aspartate 495 each bind ATP; these read TLGP, DGTTT, and NAA. The segment at 525–550 is disordered; sequence PKDEKSSSELNSAPGNGMGGGMGGMM. The segment covering 540–550 has biased composition (gly residues); the sequence is NGMGGGMGGMM.

This sequence belongs to the chaperonin (HSP60) family. Forms a cylinder of 14 subunits composed of two heptameric rings stacked back-to-back. Interacts with the co-chaperonin GroES.

Its subcellular location is the cytoplasm. It catalyses the reaction ATP + H2O + a folded polypeptide = ADP + phosphate + an unfolded polypeptide.. Its function is as follows. Together with its co-chaperonin GroES, plays an essential role in assisting protein folding. The GroEL-GroES system forms a nano-cage that allows encapsulation of the non-native substrate proteins and provides a physical environment optimized to promote and accelerate protein folding. This Buchnera aphidicola subsp. Cinara cedri (strain Cc) protein is Chaperonin GroEL.